A 526-amino-acid chain; its full sequence is Glutamyl-tRNA(Gln) amidotransferase subunit A, mitochondrial (526 aa).

Active-site charge relay system residues include K76 and S171. S195 (acyl-ester intermediate) is an active-site residue.

The protein belongs to the amidase family. GatA subfamily. In terms of assembly, subunit of the heterotrimeric GatCAB amidotransferase (AdT) complex, composed of A (QRSL1), B (GATB) and C (GATC) subunits.

It localises to the mitochondrion. The catalysed reaction is L-glutamyl-tRNA(Gln) + L-glutamine + ATP + H2O = L-glutaminyl-tRNA(Gln) + L-glutamate + ADP + phosphate + H(+). Its function is as follows. Allows the formation of correctly charged Gln-tRNA(Gln) through the transamidation of misacylated Glu-tRNA(Gln) in the mitochondria. The reaction takes place in the presence of glutamine and ATP through an activated gamma-phospho-Glu-tRNA(Gln). The polypeptide is Glutamyl-tRNA(Gln) amidotransferase subunit A, mitochondrial (Canis lupus familiaris (Dog)).